Consider the following 343-residue polypeptide: Tetraacyldisaccharide 4'-kinase (343 aa).

58 to 65 lines the ATP pocket; sequence VAGGAGKT.

The protein belongs to the LpxK family.

It carries out the reaction a lipid A disaccharide + ATP = a lipid IVA + ADP + H(+). The protein operates within glycolipid biosynthesis; lipid IV(A) biosynthesis; lipid IV(A) from (3R)-3-hydroxytetradecanoyl-[acyl-carrier-protein] and UDP-N-acetyl-alpha-D-glucosamine: step 6/6. In terms of biological role, transfers the gamma-phosphate of ATP to the 4'-position of a tetraacyldisaccharide 1-phosphate intermediate (termed DS-1-P) to form tetraacyldisaccharide 1,4'-bis-phosphate (lipid IVA). In Polaromonas naphthalenivorans (strain CJ2), this protein is Tetraacyldisaccharide 4'-kinase.